A 335-amino-acid polypeptide reads, in one-letter code: Anthranilate phosphoribosyltransferase (335 aa).

Residues glycine 79, 82-83 (GD), serine 87, 89-92 (NIST), 107-115 (KHGNRSITS), and serine 119 each bind 5-phospho-alpha-D-ribose 1-diphosphate. Glycine 79 provides a ligand contact to anthranilate. Serine 91 lines the Mg(2+) pocket. Position 110 (asparagine 110) interacts with anthranilate. Arginine 165 lines the anthranilate pocket. Mg(2+) is bound by residues aspartate 224 and glutamate 225.

The protein belongs to the anthranilate phosphoribosyltransferase family. In terms of assembly, homodimer. Requires Mg(2+) as cofactor.

The enzyme catalyses N-(5-phospho-beta-D-ribosyl)anthranilate + diphosphate = 5-phospho-alpha-D-ribose 1-diphosphate + anthranilate. The protein operates within amino-acid biosynthesis; L-tryptophan biosynthesis; L-tryptophan from chorismate: step 2/5. In terms of biological role, catalyzes the transfer of the phosphoribosyl group of 5-phosphorylribose-1-pyrophosphate (PRPP) to anthranilate to yield N-(5'-phosphoribosyl)-anthranilate (PRA). The protein is Anthranilate phosphoribosyltransferase of Lactococcus lactis subsp. lactis (strain IL1403) (Streptococcus lactis).